A 490-amino-acid chain; its full sequence is Bifunctional protein HldE (490 aa).

A ribokinase region spans residues 1–330; sequence MERKNVESLF…GSLGFQHGEG (330 aa). 205 to 208 contacts ATP; sequence NRKE. Residue aspartate 275 is part of the active site. Positions 356-490 are cytidylyltransferase; that stretch reads FTNGCFDLLH…EKILKAYGEE (135 aa).

The protein in the N-terminal section; belongs to the carbohydrate kinase PfkB family. In the C-terminal section; belongs to the cytidylyltransferase family. Homodimer.

The enzyme catalyses D-glycero-beta-D-manno-heptose 7-phosphate + ATP = D-glycero-beta-D-manno-heptose 1,7-bisphosphate + ADP + H(+). It carries out the reaction D-glycero-beta-D-manno-heptose 1-phosphate + ATP + H(+) = ADP-D-glycero-beta-D-manno-heptose + diphosphate. It participates in nucleotide-sugar biosynthesis; ADP-L-glycero-beta-D-manno-heptose biosynthesis; ADP-L-glycero-beta-D-manno-heptose from D-glycero-beta-D-manno-heptose 7-phosphate: step 1/4. The protein operates within nucleotide-sugar biosynthesis; ADP-L-glycero-beta-D-manno-heptose biosynthesis; ADP-L-glycero-beta-D-manno-heptose from D-glycero-beta-D-manno-heptose 7-phosphate: step 3/4. In terms of biological role, catalyzes the phosphorylation of D-glycero-D-manno-heptose 7-phosphate at the C-1 position to selectively form D-glycero-beta-D-manno-heptose-1,7-bisphosphate. Functionally, catalyzes the ADP transfer from ATP to D-glycero-beta-D-manno-heptose 1-phosphate, yielding ADP-D-glycero-beta-D-manno-heptose. This chain is Bifunctional protein HldE, found in Geobacter sulfurreducens (strain ATCC 51573 / DSM 12127 / PCA).